An 816-amino-acid polypeptide reads, in one-letter code: uncharacterized protein (816 aa).

Disordered stretches follow at residues 1 to 34 (MLFNINRQEDDPFTQLINQSSANTQNQQAHQQES), 65 to 101 (RQNNRAYGEDAKNRKFPTVSATSAYSKQQPKDLGYKN), 154 to 406 (DEKD…ENPE), and 770 to 816 (RQHK…VMYA). Low complexity predominate over residues 18-32 (NQSSANTQNQQAHQQ). The segment covering 83–92 (VSATSAYSKQ) has biased composition (polar residues). Low complexity predominate over residues 161 to 223 (TTTSSSTSTS…STSTTSTSTT (63 aa)). The span at 246–260 (ESTSIGKGTADSAQI) shows a compositional bias: polar residues. Phosphoserine is present on Ser-286. Positions 292–316 (DEQKEEKSDVKKVNPPSGEEKKEVE) are enriched in basic and acidic residues. A compositionally biased stretch (acidic residues) spans 317 to 326 (AEGDAEEETE). The span at 327–342 (QSSAEESAERTSTPET) shows a compositional bias: low complexity. 2 positions are modified to phosphoserine: Ser-343 and Ser-347. Residues 343–353 (SEPESEEDESP) show a composition bias toward acidic residues. Residues 380–396 (KSPTSSSTQKSKTAAPS) show a composition bias toward low complexity. Composition is skewed to basic and acidic residues over residues 770–792 (RQHKQAEGIHAAENHKIPNDRSQ) and 799–816 (PKDDSLYEYHTEEDVMYA). Thr-809 carries the phosphothreonine modification.

In terms of processing, pyrophosphorylated by 5-diphosphoinositol pentakisphosphate (5-IP7). Serine pyrophosphorylation is achieved by Mg(2+)-dependent, but enzyme independent transfer of a beta-phosphate from a inositol pyrophosphate to a pre-phosphorylated serine residue.

This is an uncharacterized protein from Saccharomyces cerevisiae (strain ATCC 204508 / S288c) (Baker's yeast).